The sequence spans 382 residues: Dual-specificity RNA methyltransferase RlmN (382 aa).

E91 (proton acceptor) is an active-site residue. One can recognise a Radical SAM core domain in the interval 97 to 339 (EEDRGTLCIS…TTIRKTRGDD (243 aa)). A disulfide bridge connects residues C104 and C344. [4Fe-4S] cluster is bound by residues C111, C115, and C118. Residues 165-166 (GE), S197, 219-221 (SLH), and N301 each bind S-adenosyl-L-methionine. The S-methylcysteine intermediate role is filled by C344.

This sequence belongs to the radical SAM superfamily. RlmN family. [4Fe-4S] cluster is required as a cofactor.

The protein resides in the cytoplasm. It carries out the reaction adenosine(2503) in 23S rRNA + 2 reduced [2Fe-2S]-[ferredoxin] + 2 S-adenosyl-L-methionine = 2-methyladenosine(2503) in 23S rRNA + 5'-deoxyadenosine + L-methionine + 2 oxidized [2Fe-2S]-[ferredoxin] + S-adenosyl-L-homocysteine. The catalysed reaction is adenosine(37) in tRNA + 2 reduced [2Fe-2S]-[ferredoxin] + 2 S-adenosyl-L-methionine = 2-methyladenosine(37) in tRNA + 5'-deoxyadenosine + L-methionine + 2 oxidized [2Fe-2S]-[ferredoxin] + S-adenosyl-L-homocysteine. Functionally, specifically methylates position 2 of adenine 2503 in 23S rRNA and position 2 of adenine 37 in tRNAs. m2A2503 modification seems to play a crucial role in the proofreading step occurring at the peptidyl transferase center and thus would serve to optimize ribosomal fidelity. In Albidiferax ferrireducens (strain ATCC BAA-621 / DSM 15236 / T118) (Rhodoferax ferrireducens), this protein is Dual-specificity RNA methyltransferase RlmN.